The chain runs to 1331 residues: Disease resistance protein RUN1 (1331 aa).

Residues 1-20 form a disordered region; it reads MASTSSSRASSSSSSSSTPS. The TIR domain maps to 25–190; the sequence is ITYDVFLSFR…EITDSIFRRL (166 aa). NAD(+)-binding positions include 34 to 39 and G66; that span reads RGEDTR. Residue E100 is part of the active site. One can recognise an NB-ARC domain in the interval 206 to 434; it reads SHVKEMIWRL…REPEAEILSV (229 aa). LRR repeat units follow at residues 429–452, 480–509, 540–565, 616–638, 648–673, 684–708, 709–732, 734–756, 757–779, 781–803, 804–826, 828–850, 851–873, 875–897, 898–920, 922–944, 945–967, 969–991, 992–1014, and 1017–1040; these read AEILSVLKRSYDGLGRTEKSIFLD, IKNLNDKCLITLQYNRIRMHDLIQQMGWEI, IKRVETISLDLSKLKRVCSNSNAFAK, SYELRYLRWDGYPLDFLPSNFDG, CSNIKQLRLGNKDLEMLKVIDLSYSR, MPNLERLFLRGCVSLIDIHPSVGNM, KKLTTLSLKSCKKLKNLPDSIGDL, SLEILDLAYCSKFEKFPEKGGNM, KSLTELDLQNTAIKDLPDSIGDL, SLKYLDLSDCSKFEKFPEKGGNM, KSLRELDLRNTAIKDLPDSIRDL, SLERLYLSYCSKFEKFPEKGGNM, KSLMELDLQNTAIKDLPDSIGDL, SLKYLDLSNCSKFEKFPEKGGNM, KSLTELFLENTAIKDLPDSIGDL, SLVSLNLSDCSKFEKFPEKGGNM, KSLNWLYLNNTAIKDLPDSIGDL, SLMRLYLSNSSKFEKLPEKVGNM, KSLELLDLRNTAIKDLPDSIGDL, and LEKLSLSNCPKFEVLPLSLKAIDA. The Nuclear localization signal motif lies at 1287–1291; that stretch reads RKRRR.

The protein belongs to the disease resistance TIR-NB-LRR family.

The protein resides in the nucleus. The protein localises to the cytoplasm. The enzyme catalyses NAD(+) + H2O = ADP-D-ribose + nicotinamide + H(+). It catalyses the reaction NADP(+) + H2O = ADP-D-ribose 2'-phosphate + nicotinamide + H(+). Disease resistance (R) protein that confers resistance to multiple powdery and downy mildew by promoting cell death. Acts as a NAD(+) hydrolase (NADase): in response to activation, catalyzes cleavage of NAD(+) into ADP-D-ribose (ADPR) and nicotinamide; NAD(+) cleavage triggering a defense system that promotes cell death. Also able to hydrolyze NADP(+), but not other NAD(+)-related molecules. The protein is Disease resistance protein RUN1 of Vitis rotundifolia (Muscadine grape).